The sequence spans 376 residues: 3-dehydroquinate synthase (376 aa).

NAD(+) is bound by residues 115 to 119 (GVIGD), 139 to 140 (TS), Lys152, and Lys161. Residues Glu194, His256, and His275 each coordinate Zn(2+).

Belongs to the sugar phosphate cyclases superfamily. Dehydroquinate synthase family. The cofactor is Co(2+). Requires Zn(2+) as cofactor. It depends on NAD(+) as a cofactor.

The protein resides in the cytoplasm. The enzyme catalyses 7-phospho-2-dehydro-3-deoxy-D-arabino-heptonate = 3-dehydroquinate + phosphate. It functions in the pathway metabolic intermediate biosynthesis; chorismate biosynthesis; chorismate from D-erythrose 4-phosphate and phosphoenolpyruvate: step 2/7. In terms of biological role, catalyzes the conversion of 3-deoxy-D-arabino-heptulosonate 7-phosphate (DAHP) to dehydroquinate (DHQ). The protein is 3-dehydroquinate synthase of Rhizobium johnstonii (strain DSM 114642 / LMG 32736 / 3841) (Rhizobium leguminosarum bv. viciae).